Here is a 31-residue protein sequence, read N- to C-terminus: Photosystem I reaction center subunit XII (31 aa).

Residues 7–26 (QISIILLIALIPAFFSLKLG) traverse the membrane as a helical segment.

This sequence belongs to the PsaM family.

It localises to the plastid. The protein localises to the chloroplast thylakoid membrane. The sequence is that of Photosystem I reaction center subunit XII from Euglena myxocylindracea.